Consider the following 60-residue polypeptide: Short neurotoxin 1 (60 aa).

4 disulfides stabilise this stretch: Cys-3/Cys-22, Cys-17/Cys-39, Cys-41/Cys-52, and Cys-53/Cys-58.

The protein belongs to the three-finger toxin family. Short-chain subfamily. Type I alpha-neurotoxin sub-subfamily. As to expression, expressed by the venom gland.

The protein localises to the secreted. Binds to muscle nicotinic acetylcholine receptor (nAChR) and inhibit acetylcholine from binding to the receptor, thereby impairing neuromuscular transmission. The sequence is that of Short neurotoxin 1 from Hydrophis schistosus (Beaked sea snake).